A 743-amino-acid chain; its full sequence is Phosphoribosylformylglycinamidine synthase subunit PurL (743 aa).

The active site involves H54. Residues Y57 and K96 each contribute to the ATP site. Position 98 (E98) interacts with Mg(2+). Substrate contacts are provided by residues 99–102 (SHNH) and R121. H100 functions as the Proton acceptor in the catalytic mechanism. A Mg(2+)-binding site is contributed by D122. Q245 lines the substrate pocket. A Mg(2+)-binding site is contributed by D273. 317–319 (ESQ) serves as a coordination point for substrate. ATP is bound by residues D500 and G537. Residue N538 participates in Mg(2+) binding. Residue S540 participates in substrate binding.

The protein belongs to the FGAMS family. As to quaternary structure, monomer. Part of the FGAM synthase complex composed of 1 PurL, 1 PurQ and 2 PurS subunits.

It is found in the cytoplasm. The catalysed reaction is N(2)-formyl-N(1)-(5-phospho-beta-D-ribosyl)glycinamide + L-glutamine + ATP + H2O = 2-formamido-N(1)-(5-O-phospho-beta-D-ribosyl)acetamidine + L-glutamate + ADP + phosphate + H(+). It functions in the pathway purine metabolism; IMP biosynthesis via de novo pathway; 5-amino-1-(5-phospho-D-ribosyl)imidazole from N(2)-formyl-N(1)-(5-phospho-D-ribosyl)glycinamide: step 1/2. Its function is as follows. Part of the phosphoribosylformylglycinamidine synthase complex involved in the purines biosynthetic pathway. Catalyzes the ATP-dependent conversion of formylglycinamide ribonucleotide (FGAR) and glutamine to yield formylglycinamidine ribonucleotide (FGAM) and glutamate. The FGAM synthase complex is composed of three subunits. PurQ produces an ammonia molecule by converting glutamine to glutamate. PurL transfers the ammonia molecule to FGAR to form FGAM in an ATP-dependent manner. PurS interacts with PurQ and PurL and is thought to assist in the transfer of the ammonia molecule from PurQ to PurL. This is Phosphoribosylformylglycinamidine synthase subunit PurL from Bacillus pumilus (strain SAFR-032).